A 275-amino-acid chain; its full sequence is Trypsin-3 (275 aa).

The N-terminal stretch at 1–22 (MISNKIAILLAVLVVAVACAQA) is a signal peptide. The propeptide at 23 to 48 (RVALKHRSVQALPRFLPRPKYDVGHR) is activation peptide. Residues 49–274 (IVGGFEIDVS…VRDWVRENSG (226 aa)) enclose the Peptidase S1 domain. A disulfide bridge links Cys-74 with Cys-90. Residues His-89 and Asp-134 each act as charge relay system in the active site. 2 disulfides stabilise this stretch: Cys-199–Cys-215 and Cys-226–Cys-250. Ser-230 functions as the Charge relay system in the catalytic mechanism.

Belongs to the peptidase S1 family. In terms of tissue distribution, expressed in the midgut. Expression levels drop a few hours after blood feeding and pick up again 28 hours later.

Its subcellular location is the secreted. It catalyses the reaction Preferential cleavage: Arg-|-Xaa, Lys-|-Xaa.. Its function is as follows. Constitutive trypsin that is expressed 2 days after emergence, coinciding with host seeking behavior of the female. This Anopheles gambiae (African malaria mosquito) protein is Trypsin-3 (TRYP3).